A 204-amino-acid polypeptide reads, in one-letter code: Histone chaperone ASF1A (204 aa).

The tract at residues 1–156 (MAKVQVNNVV…TRFHINWEDN (156 aa)) is interaction with histone H3, CHAF1B, and HIRA. A Required for interaction with HIRA motif is present at residues 31–37 (IEDLSED). Positions 155–204 (DNTEKLEDAESSNPNLPSLLSTDALPSASKGWSTSENSLNVMLESHMDCM) are required for interaction with HIRA. Phosphoserine; by TLK2 is present on Ser-192.

This sequence belongs to the ASF1 family. Interacts with histone H3 (via C-terminus), including histone H3.1, H3.2 and H3.3, and histone H4; the interaction with H3 is direct. Probably interacts with the heterodimeric form of H3-H4 taking the place of the second dimer. Interacts with the CHAF1A, CHAF1B and RBBP4 subunits of the CAF-1 complex. Interacts with CABIN1, HAT1, HIRA, NASP, TAF1 and UBN1. Found in a soluble complex with NASP and histones H3 and H4; the interaction with NASP is probably indirect and mediated by H3-H4. Interacts with CDAN1. Found in a cytosolic complex with IPO4 and histones H3 and H4. Interacts with CREBBP. Post-translationally, phosphorylated by TLK1 and TLK2. Highly phosphorylated in S-phase and at lower levels in M-phase. TLK2-mediated phosphorylation at Ser-192 prevents proteasome-dependent degradation.

The protein localises to the nucleus. Histone chaperone that facilitates histone deposition and histone exchange and removal during nucleosome assembly and disassembly. Cooperates with chromatin assembly factor 1 (CAF-1) to promote replication-dependent chromatin assembly and with HIRA to promote replication-independent chromatin assembly. Promotes homologous recombination-mediated repair of double-strand breaks (DSBs) at stalled or collapsed replication forks: acts by mediating histone replacement at DSBs, leading to recruitment of the MMS22L-TONSL complex and subsequent loading of RAD51. Also involved in the nuclear import of the histone H3-H4 dimer together with importin-4 (IPO4): specifically recognizes and binds newly synthesized histones with the monomethylation of H3 'Lys-9' and acetylation at 'Lys-14' (H3K9me1K14ac) marks, and diacetylation at 'Lys-5' and 'Lys-12' of H4 (H4K5K12ac) marks in the cytosol. Required for the formation of senescence-associated heterochromatin foci (SAHF) and efficient senescence-associated cell cycle exit. The sequence is that of Histone chaperone ASF1A (ASF1A) from Bos taurus (Bovine).